The primary structure comprises 273 residues: 3-methyl-2-oxobutanoate hydroxymethyltransferase (273 aa).

The Mg(2+) site is built by D53 and D92. 3-methyl-2-oxobutanoate-binding positions include D53–S54, D92, and K122. Residue E124 participates in Mg(2+) binding. The Proton acceptor role is filled by E191.

It belongs to the PanB family. In terms of assembly, homodecamer; pentamer of dimers. Mg(2+) serves as cofactor.

The protein resides in the cytoplasm. The enzyme catalyses 3-methyl-2-oxobutanoate + (6R)-5,10-methylene-5,6,7,8-tetrahydrofolate + H2O = 2-dehydropantoate + (6S)-5,6,7,8-tetrahydrofolate. The protein operates within cofactor biosynthesis; (R)-pantothenate biosynthesis; (R)-pantoate from 3-methyl-2-oxobutanoate: step 1/2. Its function is as follows. Catalyzes the reversible reaction in which hydroxymethyl group from 5,10-methylenetetrahydrofolate is transferred onto alpha-ketoisovalerate to form ketopantoate. The polypeptide is 3-methyl-2-oxobutanoate hydroxymethyltransferase (Porphyromonas gingivalis (strain ATCC 33277 / DSM 20709 / CIP 103683 / JCM 12257 / NCTC 11834 / 2561)).